The primary structure comprises 796 residues: Ent-copalyl diphosphate synthase 4 (796 aa).

Residues 1 to 23 (MSSSSIVTSLLRPTTAADGVLPR) constitute a chloroplast transit peptide. Lysine 240 is a binding site for substrate. Positions 371 and 373 each coordinate Mg(2+). The DXDD motif motif lies at 371–374 (DVDD). Residue lysine 457 coordinates substrate.

The protein belongs to the terpene synthase family. Tpsc subfamily. The cofactor is Mg(2+). In terms of tissue distribution, highly expressed in leaves, and, at low levels, in stems, but barely in roots and flowers.

It is found in the plastid. The protein resides in the chloroplast. The catalysed reaction is (2E,6E,10E)-geranylgeranyl diphosphate = ent-copalyl diphosphate. It participates in secondary metabolite biosynthesis; terpenoid biosynthesis. In terms of biological role, involved in the biosynthesis of ent-kaurene diterpenoids natural products such as oridonin, miltiradiene, eriocalyxin B and nezukol, known to exhibit antitumor, anti-inflammatory and antibacterial activities. Catalyzes the conversion of (2E,6E,10E)-geranylgeranyl diphosphate (GGPP) to ent-copalyl diphosphate (ent-CPP). This is Ent-copalyl diphosphate synthase 4 from Isodon rubescens (Rabdosia rubescens).